Consider the following 162-residue polypeptide: MLLTAEFWVAVAFVAFLVIVWRVGGFSMMTNGLDSRAKRVRNELDEARRLREEAAAVLADYKRRRTEAEREAEAIISGAREDAERIAAEGHARLNDFVARRTKSAEAKIAQAEAQASAQVRAAAADAAVKVSETLLRERLQGAAAQDLLRASLGDVKSRLQA.

Residues M1 to W21 traverse the membrane as a helical segment.

Belongs to the ATPase B chain family. In terms of assembly, F-type ATPases have 2 components, F(1) - the catalytic core - and F(0) - the membrane proton channel. F(1) has five subunits: alpha(3), beta(3), gamma(1), delta(1), epsilon(1). F(0) has three main subunits: a(1), b(2) and c(10-14). The alpha and beta chains form an alternating ring which encloses part of the gamma chain. F(1) is attached to F(0) by a central stalk formed by the gamma and epsilon chains, while a peripheral stalk is formed by the delta and b chains.

The protein resides in the cell inner membrane. F(1)F(0) ATP synthase produces ATP from ADP in the presence of a proton or sodium gradient. F-type ATPases consist of two structural domains, F(1) containing the extramembraneous catalytic core and F(0) containing the membrane proton channel, linked together by a central stalk and a peripheral stalk. During catalysis, ATP synthesis in the catalytic domain of F(1) is coupled via a rotary mechanism of the central stalk subunits to proton translocation. Functionally, component of the F(0) channel, it forms part of the peripheral stalk, linking F(1) to F(0). In Methylorubrum extorquens (strain PA1) (Methylobacterium extorquens), this protein is ATP synthase subunit b 1.